Here is a 238-residue protein sequence, read N- to C-terminus: Large ribosomal subunit protein uL2 (238 aa).

Residues 1-11 (MGKRLISQNRG) are compositionally biased toward polar residues. Disordered stretches follow at residues 1 to 22 (MGKR…APSH) and 202 to 223 (FGGG…APPG).

The protein belongs to the universal ribosomal protein uL2 family. Part of the 50S ribosomal subunit. Forms a bridge to the 30S subunit in the 70S ribosome.

One of the primary rRNA binding proteins. Required for association of the 30S and 50S subunits to form the 70S ribosome, for tRNA binding and peptide bond formation. It has been suggested to have peptidyltransferase activity; this is somewhat controversial. Makes several contacts with the 16S rRNA in the 70S ribosome. This is Large ribosomal subunit protein uL2 from Methanosarcina mazei (strain ATCC BAA-159 / DSM 3647 / Goe1 / Go1 / JCM 11833 / OCM 88) (Methanosarcina frisia).